A 105-amino-acid polypeptide reads, in one-letter code: MSTKNKKAAGGNGGAPKQTRQQSHDSQDYSSFKTVLFYCMLIVFLPVLTFFVLKGFVLDQFLDISEVKVNIASAVGAVVALHIALGLYIYRAYFGAPGSKGSKTD.

Positions Met-1 to Ser-26 are disordered. Topologically, residues Met-1–Leu-36 are cytoplasmic. The helical transmembrane segment at Phe-37–Val-57 threads the bilayer. At Leu-58–Lys-68 the chain is on the lumenal side. The helical transmembrane segment at Val-69–Ile-89 threads the bilayer. Residues Tyr-90–Asp-105 are Cytoplasmic-facing.

The protein belongs to the VMA21 family.

Its subcellular location is the endoplasmic reticulum membrane. It is found in the endoplasmic reticulum-Golgi intermediate compartment membrane. It localises to the cytoplasmic vesicle. The protein localises to the COPII-coated vesicle membrane. Its function is as follows. Required for the assembly of the V0 complex of the vacuolar ATPase (V-ATPase) in the endoplasmic reticulum. The sequence is that of Vacuolar ATPase assembly integral membrane protein VMA21 homolog from Drosophila simulans (Fruit fly).